Consider the following 421-residue polypeptide: Methionine aminopeptidase 2 (421 aa).

Residues 1–53 form a disordered region; that stretch reads MTDAEIENSPASDLKELNLENEGVEQQDQAKADESDPVESKKKKNKKKKKKKS. Residues 28 to 40 are compositionally biased toward basic and acidic residues; the sequence is DQAKADESDPVES. Residue Ser35 is modified to Phosphoserine. Residues 41-53 show a composition bias toward basic residues; sequence KKKKNKKKKKKKS. Position 174 (His174) interacts with substrate. Residues Asp194, Asp205, and His274 each coordinate a divalent metal cation. Position 282 (His282) interacts with substrate. A divalent metal cation is bound by residues Glu307 and Glu402.

This sequence belongs to the peptidase M24A family. Methionine aminopeptidase eukaryotic type 2 subfamily. Co(2+) serves as cofactor. It depends on Zn(2+) as a cofactor. The cofactor is Mn(2+). Requires Fe(2+) as cofactor.

Its subcellular location is the cytoplasm. The enzyme catalyses Release of N-terminal amino acids, preferentially methionine, from peptides and arylamides.. Functionally, cotranslationally removes the N-terminal methionine from nascent proteins. The N-terminal methionine is often cleaved when the second residue in the primary sequence is small and uncharged (Met-Ala-, Cys, Gly, Pro, Ser, Thr, or Val). This Saccharomyces cerevisiae (strain RM11-1a) (Baker's yeast) protein is Methionine aminopeptidase 2.